Reading from the N-terminus, the 87-residue chain is Omega-lycotoxin-Am1c (87 aa).

Residues 1–17 (MKLSIFFVLFFIAIAYC) form the signal peptide. Positions 18–40 (QPEFLDDEEDEVEETLPVAEEGR) are excised as a propeptide. Cystine bridges form between C44/C59, C51/C64, C58/C84, and C66/C82.

Belongs to the neurotoxin omega-lctx family. Expressed by the venom gland.

Its subcellular location is the secreted. Modulates Cav2.1/CACNA1A voltage-gated calcium channels (P/Q-type currents) in rat cerebellar Purkinje cells and hippocampal CA1-CA3 neurons. At saturating concentrations (&gt;10 nM) decelerates activation kinetics and slightly increases peak amplitude without affecting deactivation kinetics. In vivo, does not cause death when intravenously injected into mice. In rat models, through its activity on Cav2.1/CACNA1A, has an ameliorative effect on memory defects provoked by hyperstimulation of N-methyl-D-aspartate receptors (NMDARs) in the hippocampus. This Alopecosa marikovskyi (Wolf spider) protein is Omega-lycotoxin-Am1c.